Consider the following 84-residue polypeptide: U8-theraphotoxin-Hhn1c 2 (84 aa).

Positions 1–21 (MKVVLLVCLVWMMAMMELVSC) are cleaved as a signal peptide. 5 disulfides stabilise this stretch: Cys23–Cys35, Cys29–Cys44, Cys34–Cys67, Cys54–Cys75, and Cys69–Cys81.

Belongs to the AVIT (prokineticin) family. In terms of tissue distribution, expressed by the venom gland.

It localises to the secreted. In Cyriopagopus hainanus (Chinese bird spider), this protein is U8-theraphotoxin-Hhn1c 2.